A 565-amino-acid chain; its full sequence is Transmembrane 7 superfamily member 3 (565 aa).

Positions 1–21 (MWRLRLLVLAVLAAGSAEAQA) are cleaved as a signal peptide. Residues N22, N56, N70, and N259 are each glycosylated (N-linked (GlcNAc...) asparagine). Transmembrane regions (helical) follow at residues 287–307 (VSTK…CFFG), 315–335 (LFFV…TRLT), 341–361 (VRLA…VASW), 364–384 (FGIL…LVSS), 402–422 (VFWV…MGCL), 427–447 (ILAC…SYMF), and 478–498 (NDYI…TLQI).

The protein resides in the cell membrane. In terms of biological role, involved in the inhibition of cytokine-induced death of pancreatic beta cells. Involved in the promotion of insulin secretion from pancreatic beta cells. Is a downstream transcriptional target of p53/TP53, and acts as a pro-survival homeostatic factor that attenuates the development of cellular stress. Maintains protein homeostasis and promotes cell survival through attenuation of endoplasmic reticulum (ER) stress and the subsequent induction of unfolded protein response (UPR). The sequence is that of Transmembrane 7 superfamily member 3 (Tm7sf3) from Mus musculus (Mouse).